The following is a 205-amino-acid chain: Methylthioribulose-1-phosphate dehydratase (205 aa).

Zn(2+) is bound by residues His-95 and His-97.

Belongs to the aldolase class II family. MtnB subfamily. Requires Zn(2+) as cofactor.

The enzyme catalyses 5-(methylsulfanyl)-D-ribulose 1-phosphate = 5-methylsulfanyl-2,3-dioxopentyl phosphate + H2O. The protein operates within amino-acid biosynthesis; L-methionine biosynthesis via salvage pathway; L-methionine from S-methyl-5-thio-alpha-D-ribose 1-phosphate: step 2/6. Its function is as follows. Catalyzes the dehydration of methylthioribulose-1-phosphate (MTRu-1-P) into 2,3-diketo-5-methylthiopentyl-1-phosphate (DK-MTP-1-P). The sequence is that of Methylthioribulose-1-phosphate dehydratase from Microcystis aeruginosa (strain NIES-843 / IAM M-2473).